A 409-amino-acid polypeptide reads, in one-letter code: Microfibrillar-associated protein 3-like (409 aa).

The signal sequence occupies residues 1-28 (MDRLKSHLTVCFLPSVPFLILVSTLATA). Topologically, residues 29-149 (KSVTNSTLNG…LRVIFTSGDM (121 aa)) are extracellular. 5 N-linked (GlcNAc...) asparagine glycosylation sites follow: Asn-33, Asn-37, Asn-67, Asn-111, and Asn-135. Residues 47-141 (PVIIARTDHI…GTVNNTVTLR (95 aa)) enclose the Ig-like C2-type domain. Cys-68 and Cys-125 are disulfide-bonded. A helical transmembrane segment spans residues 150–172 (GVYYMVVCLVAFTIVMVLNITRL). Residues 173 to 409 (CMMSSHLKKT…NTCIIYESHV (237 aa)) are Cytoplasmic-facing. Tyr-287 is subject to Phosphotyrosine; by EGFR. 2 disordered regions span residues 292 to 311 (SLKR…LHEQ) and 320 to 385 (SVHP…VLPP). A phosphoserine mark is found at Ser-298, Ser-303, Ser-306, and Ser-307. Over residues 339–355 (EVKDVEETELSAEHSPE) the composition is skewed to basic and acidic residues. The span at 363-377 (VTSTELTSEEPTPVE) shows a compositional bias: low complexity.

As to expression, highly expressed in testis.

It is found in the cell membrane. It localises to the nucleus. Its subcellular location is the cytoplasm. Functionally, may participate in the nuclear signaling of EGFR and MAPK1/ERK2. May a have a role in metastasis. The sequence is that of Microfibrillar-associated protein 3-like (MFAP3L) from Homo sapiens (Human).